A 266-amino-acid polypeptide reads, in one-letter code: Phage-like element PBSX protein XkdC (266 aa).

Residue 124–131 coordinates ATP; that stretch reads GQPGSGKT.

The protein to B.subtilis YqaM.

May function as a transcriptional antiterminator. This Bacillus subtilis (strain 168) protein is Phage-like element PBSX protein XkdC (xkdC).